We begin with the raw amino-acid sequence, 174 residues long: DNA-directed RNA polymerase IV subunit 7 (174 aa).

The protein belongs to the eukaryotic RPB7/RPC8 RNA polymerase subunit family. In terms of assembly, component of the RNA polymerase IV complex. Interacts with NRPD1.

Its subcellular location is the nucleus. Functionally, DNA-dependent RNA polymerase catalyzes the transcription of DNA into RNA using the four ribonucleoside triphosphates as substrates. Component of RNA polymerase IV which mediates 24-nt short-interfering RNAs (siRNA) accumulation. Implicated in siRNA-directed heterochromatin formation through the action of DCL3 and AGO4, and subsequent DNA methylation-dependent silencing of targeted sequences. Essential component of a self-reinforcing loop coupling de novo DNA methylation to siRNA production. Required for intercellular but not intracellular RNA interference (RNAi) leading to systemic post-transcriptional gene silencing. Involved in the maintenance of post-transcriptional RNA silencing. The sequence is that of DNA-directed RNA polymerase IV subunit 7 (NRPD7) from Arabidopsis thaliana (Mouse-ear cress).